A 269-amino-acid chain; its full sequence is 5'-nucleotidase SurE (269 aa).

4 residues coordinate a divalent metal cation: aspartate 8, aspartate 9, serine 39, and asparagine 92.

This sequence belongs to the SurE nucleotidase family. A divalent metal cation is required as a cofactor.

The protein localises to the cytoplasm. It catalyses the reaction a ribonucleoside 5'-phosphate + H2O = a ribonucleoside + phosphate. Nucleotidase that shows phosphatase activity on nucleoside 5'-monophosphates. The chain is 5'-nucleotidase SurE from Psychrobacter cryohalolentis (strain ATCC BAA-1226 / DSM 17306 / VKM B-2378 / K5).